A 351-amino-acid polypeptide reads, in one-letter code: Phenylacetaldoxime dehydratase (351 aa).

This sequence belongs to the heme-containing dehydratase family. Monomer. Heme b is required as a cofactor.

It catalyses the reaction (Z)-phenylacetaldehyde oxime = phenylacetonitrile + H2O. In terms of biological role, catalyzes the stoichiometric dehydration of Z-phenylacetaldoxime to phenylacetonitrile. Prefers the Z-form of phenylacetaldoxime over its E-isomer. This is Phenylacetaldoxime dehydratase from Bacillus sp. (strain OxB-1).